The primary structure comprises 115 residues: Large ribosomal subunit protein bL19 (115 aa).

It belongs to the bacterial ribosomal protein bL19 family.

This protein is located at the 30S-50S ribosomal subunit interface and may play a role in the structure and function of the aminoacyl-tRNA binding site. The sequence is that of Large ribosomal subunit protein bL19 from Tolumonas auensis (strain DSM 9187 / NBRC 110442 / TA 4).